The sequence spans 292 residues: Sulfofructosephosphate aldolase (292 aa).

K193 serves as the catalytic Schiff-base intermediate with substrate.

It belongs to the aldolase LacD family. As to quaternary structure, homotetramer.

The catalysed reaction is 6-deoxy-6-sulfo-D-fructose 1-phosphate = (2S)-3-sulfolactaldehyde + dihydroxyacetone phosphate. Cleaves 6-deoxy-6-sulfo-D-fructose 1-phosphate (SFP) to form dihydroxyacetone phosphate (DHAP) and 3-sulfolactaldehyde (SLA). This chain is Sulfofructosephosphate aldolase (yihT), found in Escherichia coli (strain K12).